The primary structure comprises 493 residues: MTELTKLTISEIRAKLADKEFTALELTEAYLSAIQTANEKLNAYITVTADKAREMAKASDMRLMQGGARPLEGVPLGIKDLFATEGVHTQACSHILDAFKPRYESTVTTNLWADGAVMLGKLNMDEFAMGSSNETSYYGPVVNPWREEGGNKDLVPGGSSGGSAAAVAAWLCAGATATDTGGSIRQPAAFTATVGIKPTYGRCSRWGIVAFASSLDQAGPIARDVRDAAILLKSMASVDPKDTTSIDIPVPDYEAAIGQSVKGLKIGIPKEYRVEGMPAEIEALWHKGIEWMRDAGAEIVDISLPHTKYALPAYYIVAPAEASSNLARYDGVRYGLRVPGRDITEMYENSRAAGFGREVKRRIMIGTYVLSAGYYDAYYLRAQRVRTLIKRDFEQAFEAGVDAILTPATPSAAFGIADQEMNADPVKMYLNDIFTVTVNMAGLPGIAVPAGLDSRGLPLGLQLIGRAFDEETLFRTAHIIEQAAGKFEPKRWW.

Catalysis depends on charge relay system residues Lys-79 and Ser-159. Residue Ser-183 is the Acyl-ester intermediate of the active site.

It belongs to the amidase family. GatA subfamily. In terms of assembly, heterotrimer of A, B and C subunits.

The catalysed reaction is L-glutamyl-tRNA(Gln) + L-glutamine + ATP + H2O = L-glutaminyl-tRNA(Gln) + L-glutamate + ADP + phosphate + H(+). Its function is as follows. Allows the formation of correctly charged Gln-tRNA(Gln) through the transamidation of misacylated Glu-tRNA(Gln) in organisms which lack glutaminyl-tRNA synthetase. The reaction takes place in the presence of glutamine and ATP through an activated gamma-phospho-Glu-tRNA(Gln). The sequence is that of Glutamyl-tRNA(Gln) amidotransferase subunit A from Chelativorans sp. (strain BNC1).